The chain runs to 362 residues: Bifunctional chorismate mutase/prephenate dehydratase (362 aa).

Residues 3-91 form the Chorismate mutase domain; it reads QTIDELLIPH…ECLAVERPLT (89 aa). Arg13, Arg30, Lys41, and Glu52 together coordinate substrate. The region spanning 92-269 is the Prephenate dehydratase domain; that stretch reads IAYLGPQGTF…NTTRFLVMGH (178 aa). The region spanning 281-356 is the ACT domain; that stretch reads SLAVSAPNRA…RASFVKAIGS (76 aa).

Its subcellular location is the cytoplasm. The catalysed reaction is chorismate = prephenate. It carries out the reaction prephenate + H(+) = 3-phenylpyruvate + CO2 + H2O. It functions in the pathway amino-acid biosynthesis; L-phenylalanine biosynthesis; phenylpyruvate from prephenate: step 1/1. The protein operates within metabolic intermediate biosynthesis; prephenate biosynthesis; prephenate from chorismate: step 1/1. Catalyzes the Claisen rearrangement of chorismate to prephenate and the decarboxylation/dehydration of prephenate to phenylpyruvate. The polypeptide is Bifunctional chorismate mutase/prephenate dehydratase (pheA) (Neisseria gonorrhoeae (strain ATCC 700825 / FA 1090)).